Reading from the N-terminus, the 416-residue chain is MTYHPKSDFLRVMQERGYLADCTDKQALDEALSKGVVPAYIGYDATAASLHVGHLLNIMMLRWLQKTGHKPITLMGGGTTKVGDPSFRSEERPLLTPDKIDENIEGMRKVFARYLSYGEGATDALMLNNAEWLDHLNYLDFLRDIGRHFSVNRMLSFESVKSRLDREQSLSFLEFNYMILQAYDFLELFRRYGCRLQMGGSDQWGNIVNGIDLTRRVLEGEIFGLTSPLLTTSDGRKMGKSAGGAVWLNGEMLAPYDFWQFWRNTTDADVGRFLKLYTELPVEECDRLGALQGSEINAAKILLANEVTTLLHGRDAAEAAEATARAVFEEGGVGGALEVVELPATTLGEGLSVAHFLVAAGLVASGKEAKRLVAESGLRFNNEPVGDANAPVTAATVGEELKVSIGRKKHKLVRLS.

An L-tyrosine-binding site is contributed by Y40. The 'HIGH' region signature appears at 45–54; sequence ATAASLHVGH. 2 residues coordinate L-tyrosine: Y177 and Q181. The short motif at 237–241 is the 'KMSKS' region element; the sequence is KMGKS. K240 contacts ATP. One can recognise an S4 RNA-binding domain in the interval 351 to 416; sequence LSVAHFLVAA…RKKHKLVRLS (66 aa).

It belongs to the class-I aminoacyl-tRNA synthetase family. TyrS type 1 subfamily. Homodimer.

The protein localises to the cytoplasm. It carries out the reaction tRNA(Tyr) + L-tyrosine + ATP = L-tyrosyl-tRNA(Tyr) + AMP + diphosphate + H(+). Its function is as follows. Catalyzes the attachment of tyrosine to tRNA(Tyr) in a two-step reaction: tyrosine is first activated by ATP to form Tyr-AMP and then transferred to the acceptor end of tRNA(Tyr). The polypeptide is Tyrosine--tRNA ligase (Cereibacter sphaeroides (strain KD131 / KCTC 12085) (Rhodobacter sphaeroides)).